Here is a 354-residue protein sequence, read N- to C-terminus: Protein CbrA (354 aa).

Belongs to the CbrA family.

The chain is Protein CbrA (cbrA) from Escherichia coli (strain K12).